A 146-amino-acid chain; its full sequence is 3-hydroxyacyl-[acyl-carrier-protein] dehydratase FabZ (146 aa).

His49 is a catalytic residue.

The protein belongs to the thioester dehydratase family. FabZ subfamily.

It localises to the cytoplasm. It carries out the reaction a (3R)-hydroxyacyl-[ACP] = a (2E)-enoyl-[ACP] + H2O. Involved in unsaturated fatty acids biosynthesis. Catalyzes the dehydration of short chain beta-hydroxyacyl-ACPs and long chain saturated and unsaturated beta-hydroxyacyl-ACPs. The chain is 3-hydroxyacyl-[acyl-carrier-protein] dehydratase FabZ from Pseudomonas aeruginosa (strain LESB58).